A 112-amino-acid polypeptide reads, in one-letter code: Protein Churchill (112 aa).

Zn(2+)-binding residues include cysteine 2, cysteine 5, cysteine 30, cysteine 33, histidine 59, cysteine 61, cysteine 64, histidine 66, histidine 71, cysteine 88, and cysteine 91.

Belongs to the Churchill family.

Its function is as follows. Transcriptional activator that mediates FGF signaling during neural development. Plays a role in the regulation of cell movement. Does not bind DNA by itself. The chain is Protein Churchill (Churc1) from Mus musculus (Mouse).